The following is a 610-amino-acid chain: Elongation factor 4 (610 aa).

One can recognise a tr-type G domain in the interval 11 to 193 (EKIRNFSIIA…QIVEKVPAPT (183 aa)). Residues 23 to 28 (DHGKST) and 140 to 143 (NKID) each bind GTP.

It belongs to the TRAFAC class translation factor GTPase superfamily. Classic translation factor GTPase family. LepA subfamily.

It is found in the cell membrane. The catalysed reaction is GTP + H2O = GDP + phosphate + H(+). Its function is as follows. Required for accurate and efficient protein synthesis under certain stress conditions. May act as a fidelity factor of the translation reaction, by catalyzing a one-codon backward translocation of tRNAs on improperly translocated ribosomes. Back-translocation proceeds from a post-translocation (POST) complex to a pre-translocation (PRE) complex, thus giving elongation factor G a second chance to translocate the tRNAs correctly. Binds to ribosomes in a GTP-dependent manner. This Streptococcus pyogenes serotype M3 (strain ATCC BAA-595 / MGAS315) protein is Elongation factor 4.